A 281-amino-acid chain; its full sequence is 2-dehydro-3-deoxyphosphooctonate aldolase (281 aa).

Belongs to the KdsA family.

Its subcellular location is the cytoplasm. The catalysed reaction is D-arabinose 5-phosphate + phosphoenolpyruvate + H2O = 3-deoxy-alpha-D-manno-2-octulosonate-8-phosphate + phosphate. Its pathway is carbohydrate biosynthesis; 3-deoxy-D-manno-octulosonate biosynthesis; 3-deoxy-D-manno-octulosonate from D-ribulose 5-phosphate: step 2/3. The protein operates within bacterial outer membrane biogenesis; lipopolysaccharide biosynthesis. In Pseudomonas fluorescens (strain ATCC BAA-477 / NRRL B-23932 / Pf-5), this protein is 2-dehydro-3-deoxyphosphooctonate aldolase.